The sequence spans 159 residues: Transcription elongation factor GreA (159 aa).

This sequence belongs to the GreA/GreB family.

Necessary for efficient RNA polymerase transcription elongation past template-encoded arresting sites. The arresting sites in DNA have the property of trapping a certain fraction of elongating RNA polymerases that pass through, resulting in locked ternary complexes. Cleavage of the nascent transcript by cleavage factors such as GreA or GreB allows the resumption of elongation from the new 3'terminus. GreA releases sequences of 2 to 3 nucleotides. The sequence is that of Transcription elongation factor GreA from Orientia tsutsugamushi (strain Ikeda) (Rickettsia tsutsugamushi).